We begin with the raw amino-acid sequence, 360 residues long: Phospho-N-acetylmuramoyl-pentapeptide-transferase (360 aa).

Helical transmembrane passes span 27 to 47 (GALF…ISLL), 70 to 90 (GTPT…ILLW), 98 to 118 (VWVT…DDYL), 134 to 154 (LLLE…YSPA), 168 to 188 (TLLN…VGAG), 199 to 219 (GLAI…AYLV), 239 to 259 (LAVV…FNAP), 263 to 283 (IFMG…IAVA), 288 to 308 (IVLA…IIQV), and 337 to 357 (QVVI…LATL).

The protein belongs to the glycosyltransferase 4 family. MraY subfamily. Mg(2+) is required as a cofactor.

The protein resides in the cell inner membrane. It carries out the reaction UDP-N-acetyl-alpha-D-muramoyl-L-alanyl-gamma-D-glutamyl-meso-2,6-diaminopimeloyl-D-alanyl-D-alanine + di-trans,octa-cis-undecaprenyl phosphate = di-trans,octa-cis-undecaprenyl diphospho-N-acetyl-alpha-D-muramoyl-L-alanyl-D-glutamyl-meso-2,6-diaminopimeloyl-D-alanyl-D-alanine + UMP. It functions in the pathway cell wall biogenesis; peptidoglycan biosynthesis. Its function is as follows. Catalyzes the initial step of the lipid cycle reactions in the biosynthesis of the cell wall peptidoglycan: transfers peptidoglycan precursor phospho-MurNAc-pentapeptide from UDP-MurNAc-pentapeptide onto the lipid carrier undecaprenyl phosphate, yielding undecaprenyl-pyrophosphoryl-MurNAc-pentapeptide, known as lipid I. This is Phospho-N-acetylmuramoyl-pentapeptide-transferase from Methylorubrum extorquens (strain CM4 / NCIMB 13688) (Methylobacterium extorquens).